The following is a 562-amino-acid chain: Arginine--tRNA ligase (562 aa).

Residues 121-131 (PNIAKPFSVGH) carry the 'HIGH' region motif.

Belongs to the class-I aminoacyl-tRNA synthetase family. Monomer.

The protein localises to the cytoplasm. The catalysed reaction is tRNA(Arg) + L-arginine + ATP = L-arginyl-tRNA(Arg) + AMP + diphosphate. This is Arginine--tRNA ligase from Streptococcus suis (strain 98HAH33).